The primary structure comprises 423 residues: MLPWKKHKFELLAEAPPRQASKPKGYAVSLHYSALSSLARACPEGALSRVGSMFRSKRKKLHITSEDPTYTVLYLGNATTIQARGDGCTDLAVGKIWSKSEAGRQGTKMKLTVSAQGIRMVHAEERALRRPGHLYLLHRVTYCVADARLPKVFAWVYRHELKHKAVMLRCHAVLVSKPEKAQAMALLLYQTSANALAEFKRLKRRDDARHQQQELVGAHTIPLVPLRKLLLHGPCCYKPPVERSRSAPKLGSITEDLLGEQLEQELQEEEEEEQPEGCPEEEENRAAEGDPAEEEAEAQRALVVAMHFECGDLLDTLENGRGEALGGGGGSLGPGAGPPPLLLGSASDMKAELSQLISDLGELSFGNDVRTLQADLRVTRLLSGDSTGSESSIEGGGPDATSATAGDSSRQADGASADEPHSG.

Residues 263 to 283 (EQELQEEEEEEQPEGCPEEEE) show a composition bias toward acidic residues. Disordered stretches follow at residues 263–298 (EQEL…EAEA), 321–344 (RGEA…LLLG), and 382–423 (LSGD…PHSG). A compositionally biased stretch (gly residues) spans 323–335 (EALGGGGGSLGPG). A compositionally biased stretch (low complexity) spans 383–393 (SGDSTGSESSI). A compositionally biased stretch (polar residues) spans 401-411 (TSATAGDSSRQ).

It belongs to the FAM43 family.

In Homo sapiens (Human), this protein is Protein FAM43A (FAM43A).